Here is an 85-residue protein sequence, read N- to C-terminus: Neurotoxin beta-KTx 14.3 (85 aa).

Positions 1 to 20 (MKQYIFFLALIVLTATFAEA) are cleaved as a signal peptide. Residues 21-37 (GKKTEILDKVKKVFSKG) constitute a propeptide that is removed on maturation. Residues 49-85 (ELGCPFIEKWCEDHCESKKQVGKCENFDCSCVKLGGK) form the BetaSPN-type CS-alpha/beta domain. 3 disulfide bridges follow: C52/C72, C59/C77, and C63/C79.

This sequence belongs to the long chain scorpion toxin family. Class 2 subfamily. In terms of tissue distribution, expressed by the venom gland.

Its subcellular location is the secreted. Its function is as follows. Toxin with activity on voltage-gated potassium channels. Moderately and reversibly blocks up to 50% of the activity of Kv7.1/KCNQ1 (tested at 22 uM). 3D-structure modeling of the KCNQ1-toxin complex shows that the toxin interacts with the channel pore domain. Additionally, shows a very weak effect to block voltage-gated potassium channel Kv1.1/KCNA1. Functionally, has a very weak effect to block voltage-gated potassium channel Kv1.1/KCNA1. The protein is Neurotoxin beta-KTx 14.3 of Lychas mucronatus (Chinese swimming scorpion).